Here is a 163-residue protein sequence, read N- to C-terminus: Putative pre-16S rRNA nuclease (163 aa).

It belongs to the YqgF nuclease family.

The protein resides in the cytoplasm. Functionally, could be a nuclease involved in processing of the 5'-end of pre-16S rRNA. The sequence is that of Putative pre-16S rRNA nuclease from Roseobacter denitrificans (strain ATCC 33942 / OCh 114) (Erythrobacter sp. (strain OCh 114)).